A 291-amino-acid polypeptide reads, in one-letter code: Membrane protein insertase YidC (291 aa).

The signal sequence occupies residues 1 to 19 (MKKKALLPLLLGVMVFLAG). Cys20 is lipidated: N-palmitoyl cysteine. The S-diacylglycerol cysteine moiety is linked to residue Cys20. 4 helical membrane passes run 56–76 (YGIA…PFML), 134–154 (ALGC…YFVL), 170–190 (WFNL…LYFI), and 211–231 (MIVS…ALGL). Residues 266–291 (FKENNSNSNKKGKNTQVVSKNNKKKK) form a disordered region.

It belongs to the OXA1/ALB3/YidC family. Type 2 subfamily.

The protein localises to the cell membrane. Its function is as follows. Required for the insertion and/or proper folding and/or complex formation of integral membrane proteins into the membrane. Involved in integration of membrane proteins that insert both dependently and independently of the Sec translocase complex, as well as at least some lipoproteins. In Staphylococcus haemolyticus (strain JCSC1435), this protein is Membrane protein insertase YidC.